The sequence spans 455 residues: Probable 1,4-beta-D-glucan cellobiohydrolase A (455 aa).

Positions 1-17 (MHQRALLFSAFWTAVQA) are cleaved as a signal peptide. A glycan (N-linked (GlcNAc...) asparagine) is linked at Asn81. The active-site Nucleophile is Glu227. Catalysis depends on Glu232, which acts as the Proton donor. A glycan (N-linked (GlcNAc...) asparagine) is linked at Asn285.

The protein belongs to the glycosyl hydrolase 7 (cellulase C) family.

It localises to the secreted. It carries out the reaction Hydrolysis of (1-&gt;4)-beta-D-glucosidic linkages in cellulose and cellotetraose, releasing cellobiose from the non-reducing ends of the chains.. Its function is as follows. The biological conversion of cellulose to glucose generally requires three types of hydrolytic enzymes: (1) Endoglucanases which cut internal beta-1,4-glucosidic bonds; (2) Exocellobiohydrolases that cut the disaccharide cellobiose from the non-reducing end of the cellulose polymer chain; (3) Beta-1,4-glucosidases which hydrolyze the cellobiose and other short cello-oligosaccharides to glucose. The polypeptide is Probable 1,4-beta-D-glucan cellobiohydrolase A (cbhA) (Aspergillus flavus (strain ATCC 200026 / FGSC A1120 / IAM 13836 / NRRL 3357 / JCM 12722 / SRRC 167)).